The following is a 435-amino-acid chain: Glutamyl-tRNA reductase (435 aa).

Residues 49 to 52, Ser-109, 114 to 116, and Gln-120 contribute to the substrate site; these read TCNR and ETQ. Cys-50 serves as the catalytic Nucleophile. 189-194 contributes to the NADP(+) binding site; the sequence is GAGEMS.

The protein belongs to the glutamyl-tRNA reductase family. As to quaternary structure, homodimer.

It carries out the reaction (S)-4-amino-5-oxopentanoate + tRNA(Glu) + NADP(+) = L-glutamyl-tRNA(Glu) + NADPH + H(+). It participates in porphyrin-containing compound metabolism; protoporphyrin-IX biosynthesis; 5-aminolevulinate from L-glutamyl-tRNA(Glu): step 1/2. Functionally, catalyzes the NADPH-dependent reduction of glutamyl-tRNA(Glu) to glutamate 1-semialdehyde (GSA). The chain is Glutamyl-tRNA reductase from Listeria monocytogenes serovar 1/2a (strain ATCC BAA-679 / EGD-e).